The following is a 183-amino-acid chain: Peptide deformylase (183 aa).

Fe cation contacts are provided by cysteine 110 and histidine 153. Residue glutamate 154 is part of the active site. Histidine 157 serves as a coordination point for Fe cation.

This sequence belongs to the polypeptide deformylase family. It depends on Fe(2+) as a cofactor.

It carries out the reaction N-terminal N-formyl-L-methionyl-[peptide] + H2O = N-terminal L-methionyl-[peptide] + formate. In terms of biological role, removes the formyl group from the N-terminal Met of newly synthesized proteins. Requires at least a dipeptide for an efficient rate of reaction. N-terminal L-methionine is a prerequisite for activity but the enzyme has broad specificity at other positions. This is Peptide deformylase from Listeria monocytogenes serotype 4a (strain HCC23).